The primary structure comprises 94 residues: Aspartyl/glutamyl-tRNA(Asn/Gln) amidotransferase subunit C (94 aa).

Belongs to the GatC family. In terms of assembly, heterotrimer of A, B and C subunits.

The catalysed reaction is L-glutamyl-tRNA(Gln) + L-glutamine + ATP + H2O = L-glutaminyl-tRNA(Gln) + L-glutamate + ADP + phosphate + H(+). It carries out the reaction L-aspartyl-tRNA(Asn) + L-glutamine + ATP + H2O = L-asparaginyl-tRNA(Asn) + L-glutamate + ADP + phosphate + 2 H(+). Its function is as follows. Allows the formation of correctly charged Asn-tRNA(Asn) or Gln-tRNA(Gln) through the transamidation of misacylated Asp-tRNA(Asn) or Glu-tRNA(Gln) in organisms which lack either or both of asparaginyl-tRNA or glutaminyl-tRNA synthetases. The reaction takes place in the presence of glutamine and ATP through an activated phospho-Asp-tRNA(Asn) or phospho-Glu-tRNA(Gln). The protein is Aspartyl/glutamyl-tRNA(Asn/Gln) amidotransferase subunit C of Caldicellulosiruptor bescii (strain ATCC BAA-1888 / DSM 6725 / KCTC 15123 / Z-1320) (Anaerocellum thermophilum).